The sequence spans 305 residues: Phosphopantetheine adenylyltransferase (305 aa).

Belongs to the eukaryotic CoaD family.

Its subcellular location is the cytoplasm. The protein localises to the nucleus. The catalysed reaction is (R)-4'-phosphopantetheine + ATP + H(+) = 3'-dephospho-CoA + diphosphate. In terms of biological role, reversibly transfers an adenylyl group from ATP to 4'-phosphopantetheine, yielding dephospho-CoA (dPCoA) and pyrophosphate. Plays a role in the physiological regulation of the intracellular CoA concentration. The chain is Phosphopantetheine adenylyltransferase (CAB4) from Saccharomyces cerevisiae (strain ATCC 204508 / S288c) (Baker's yeast).